Consider the following 89-residue polypeptide: Conotoxin Bu5 (89 aa).

The N-terminal stretch at 1-22 is a signal peptide; that stretch reads MKLTCVLIVAVLFLTACQLATA. The propeptide occupies 23–49; sequence ENSREEQGYSAVRSSDQIQDSDLKLTK. 3 disulfide bridges follow: Cys-51–Cys-66, Cys-58–Cys-70, and Cys-65–Cys-79. Residue Cys-79 is modified to Cysteine amide. The propeptide occupies 80–89; sequence GVSIDYYDSR.

The protein belongs to the conotoxin O1 superfamily. In terms of tissue distribution, expressed by the venom duct.

The protein localises to the secreted. The polypeptide is Conotoxin Bu5 (Conus bullatus (Bubble cone)).